The following is a 172-amino-acid chain: NADH-ubiquinone oxidoreductase chain 6 (172 aa).

The next 5 helical transmembrane spans lie at 1–21 (MTYFVLFLGLCFVLGGLAVAS), 27–47 (YGVVGLVLASVAGCGWLLSLG), 48–68 (ISFVSLVLFMVYLGGMLVVFV), 87–107 (VVGYGMGFVAVLVAGVVVGGF), and 138–158 (CGVGMFLAAGWGLLLTLFVVL).

It belongs to the complex I subunit 6 family.

The protein resides in the mitochondrion membrane. It carries out the reaction a ubiquinone + NADH + 5 H(+)(in) = a ubiquinol + NAD(+) + 4 H(+)(out). Functionally, core subunit of the mitochondrial membrane respiratory chain NADH dehydrogenase (Complex I) that is believed to belong to the minimal assembly required for catalysis. Complex I functions in the transfer of electrons from NADH to the respiratory chain. The immediate electron acceptor for the enzyme is believed to be ubiquinone. The chain is NADH-ubiquinone oxidoreductase chain 6 (MT-ND6) from Uria aalge (Common mure).